A 365-amino-acid polypeptide reads, in one-letter code: MNVLEISAQTLRNNIRIIKEYVGSAKICFPVKANAYGHGLELIVEHSHDLVDFFAVANVLEAFRVLDVVEKPVMIFGVIEYNYIDRILSKNIRVSIQDYNDIEKLEKFAKYYNKKPFVHVNLNTGMNRMGVDYNDACRTIQRAYESDWLILEGVYSHLACADNRDHPTNIKQKNRFDSIVEFTKGLSQDIICHLSNSYGFLGQKGICYDMVRPGILSYGFLPEFYVDRVIREIKPIARLLSKVVKIITLQEGEGVGYSLIYRGFEGEQLAVIPIGYGDGFPRELGDRGFVNINDVMYPMAGRMSMDGLTVSLGINEYDVKVSDTVELISAIPRNRNSAFSIAKQTNTIEYDIMSTLNDRIIRKII.

The Proton acceptor; specific for D-alanine role is filled by Lys32. Residue Lys32 is modified to N6-(pyridoxal phosphate)lysine. Residue Arg128 participates in substrate binding. Catalysis depends on Tyr257, which acts as the Proton acceptor; specific for L-alanine. Met305 lines the substrate pocket.

The protein belongs to the alanine racemase family. Pyridoxal 5'-phosphate is required as a cofactor.

The enzyme catalyses L-alanine = D-alanine. It participates in amino-acid biosynthesis; D-alanine biosynthesis; D-alanine from L-alanine: step 1/1. Catalyzes the interconversion of L-alanine and D-alanine. May also act on other amino acids. The sequence is that of Alanine racemase (alr) from Francisella tularensis subsp. novicida (strain U112).